Reading from the N-terminus, the 204-residue chain is MPKVGLFNKEGQQVGDIQLNEQVFGVEVNKYALHQVVVAQLANKRQGTQSAKTRSEVRGGGIKPWRQKGTGRARQGSIRAPQWIKGGVVFAPKPRDYRMSIPKSMRKVAMTSALTSKVADMVVLEDLTFEAPKTKEAVKMLNAFEAKKTLIITAEVNENVYKSARNIEGVTVMPVNNINVYDLLNCKTLMITKEAVNKIEEVYA.

A disordered region spans residues 44-76; that stretch reads KRQGTQSAKTRSEVRGGGIKPWRQKGTGRARQG.

Belongs to the universal ribosomal protein uL4 family. Part of the 50S ribosomal subunit.

Its function is as follows. One of the primary rRNA binding proteins, this protein initially binds near the 5'-end of the 23S rRNA. It is important during the early stages of 50S assembly. It makes multiple contacts with different domains of the 23S rRNA in the assembled 50S subunit and ribosome. In terms of biological role, forms part of the polypeptide exit tunnel. This Clostridium perfringens (strain ATCC 13124 / DSM 756 / JCM 1290 / NCIMB 6125 / NCTC 8237 / Type A) protein is Large ribosomal subunit protein uL4.